Consider the following 233-residue polypeptide: Somatolactin (233 aa).

The signal sequence occupies residues 1–24 (MNMMQVMQSVVWAVLLWPCLVSLG). 3 disulfides stabilise this stretch: C29/C39, C89/C205, and C222/C230.

Belongs to the somatotropin/prolactin family. Pituitary gland.

The protein localises to the secreted. May be associated with ion regulation and reproduction. This chain is Somatolactin, found in Oncorhynchus keta (Chum salmon).